The following is a 310-amino-acid chain: Coproporphyrin III ferrochelatase (310 aa).

Positions 184 and 265 each coordinate Fe(2+).

This sequence belongs to the ferrochelatase family.

It localises to the cytoplasm. It catalyses the reaction Fe-coproporphyrin III + 2 H(+) = coproporphyrin III + Fe(2+). It functions in the pathway porphyrin-containing compound metabolism; protoheme biosynthesis. Involved in coproporphyrin-dependent heme b biosynthesis. Catalyzes the insertion of ferrous iron into coproporphyrin III to form Fe-coproporphyrin III. This Limosilactobacillus reuteri (strain DSM 20016) (Lactobacillus reuteri) protein is Coproporphyrin III ferrochelatase.